The chain runs to 408 residues: Dihydrolipoyllysine-residue acetyltransferase component of pyruvate dehydrogenase complex (408 aa).

The Lipoyl-binding domain occupies 2-78 (PIKILMPALS…PVNSLIAVLS (77 aa)). Lys-43 carries the post-translational modification N6-lipoyllysine. The Peripheral subunit-binding (PSBD) domain maps to 128–165 (FASPLAKRLAKIGDIRLENVQGSGPHGRIVKQDILSYD). His-381 is a catalytic residue.

This sequence belongs to the 2-oxoacid dehydrogenase family. As to quaternary structure, forms a 24-polypeptide structural core with octahedral symmetry. (R)-lipoate is required as a cofactor.

It carries out the reaction N(6)-[(R)-dihydrolipoyl]-L-lysyl-[protein] + acetyl-CoA = N(6)-[(R)-S(8)-acetyldihydrolipoyl]-L-lysyl-[protein] + CoA. Functionally, the pyruvate dehydrogenase complex catalyzes the overall conversion of pyruvate to acetyl-CoA and CO(2). It contains multiple copies of three enzymatic components: pyruvate dehydrogenase (E1), dihydrolipoamide acetyltransferase (E2) and lipoamide dehydrogenase (E3). This chain is Dihydrolipoyllysine-residue acetyltransferase component of pyruvate dehydrogenase complex (pdhC), found in Rickettsia prowazekii (strain Madrid E).